Reading from the N-terminus, the 289-residue chain is 4-hydroxy-3-methylbut-2-enyl diphosphate reductase (289 aa).

Residue C13 participates in [4Fe-4S] cluster binding. (2E)-4-hydroxy-3-methylbut-2-enyl diphosphate contacts are provided by H42 and H76. Dimethylallyl diphosphate contacts are provided by H42 and H76. The isopentenyl diphosphate site is built by H42 and H76. C98 is a [4Fe-4S] cluster binding site. (2E)-4-hydroxy-3-methylbut-2-enyl diphosphate is bound at residue H130. H130 contributes to the dimethylallyl diphosphate binding site. H130 lines the isopentenyl diphosphate pocket. E132 functions as the Proton donor in the catalytic mechanism. A (2E)-4-hydroxy-3-methylbut-2-enyl diphosphate-binding site is contributed by T168. C199 is a binding site for [4Fe-4S] cluster. 4 residues coordinate (2E)-4-hydroxy-3-methylbut-2-enyl diphosphate: S227, S228, N229, and S272. S227, S228, N229, and S272 together coordinate dimethylallyl diphosphate. Isopentenyl diphosphate is bound by residues S227, S228, N229, and S272.

It belongs to the IspH family. [4Fe-4S] cluster is required as a cofactor.

It carries out the reaction isopentenyl diphosphate + 2 oxidized [2Fe-2S]-[ferredoxin] + H2O = (2E)-4-hydroxy-3-methylbut-2-enyl diphosphate + 2 reduced [2Fe-2S]-[ferredoxin] + 2 H(+). The catalysed reaction is dimethylallyl diphosphate + 2 oxidized [2Fe-2S]-[ferredoxin] + H2O = (2E)-4-hydroxy-3-methylbut-2-enyl diphosphate + 2 reduced [2Fe-2S]-[ferredoxin] + 2 H(+). Its pathway is isoprenoid biosynthesis; dimethylallyl diphosphate biosynthesis; dimethylallyl diphosphate from (2E)-4-hydroxy-3-methylbutenyl diphosphate: step 1/1. It participates in isoprenoid biosynthesis; isopentenyl diphosphate biosynthesis via DXP pathway; isopentenyl diphosphate from 1-deoxy-D-xylulose 5-phosphate: step 6/6. In terms of biological role, catalyzes the conversion of 1-hydroxy-2-methyl-2-(E)-butenyl 4-diphosphate (HMBPP) into a mixture of isopentenyl diphosphate (IPP) and dimethylallyl diphosphate (DMAPP). Acts in the terminal step of the DOXP/MEP pathway for isoprenoid precursor biosynthesis. The polypeptide is 4-hydroxy-3-methylbut-2-enyl diphosphate reductase (Porphyromonas gingivalis (strain ATCC BAA-308 / W83)).